The sequence spans 405 residues: Homocitrate synthase AksA (405 aa).

Residues 23-274 form the Pyruvate carboxyltransferase domain; it reads IEICDVTLRD…IERYDTTKLT (252 aa).

Belongs to the alpha-IPM synthase/homocitrate synthase family.

The enzyme catalyses acetyl-CoA + 2-oxoglutarate + H2O = (2R)-homocitrate + CoA + H(+). The catalysed reaction is 2-oxoadipate + acetyl-CoA + H2O = (R)-dihomocitrate + CoA + H(+). It catalyses the reaction 2-oxoheptanedioate + acetyl-CoA + H2O = (R)-trihomocitrate + CoA + H(+). It participates in organic acid metabolism; 2-oxosuberate biosynthesis. Its function is as follows. Catalyzes the condensation of alpha-ketoglutarate and acetyl-CoA to form (R)-homocitrate. Can also catalyze the condensation of alpha-ketoadipate with acetyl-CoA to form (R)-homo(2)citrate, and the condensation of alpha-ketopimelate with acetyl-CoA to form (R)-homo(3)citrate. These reactions are part of the biosynthesis pathway of coenzyme B and biotin. In Methanosarcina acetivorans (strain ATCC 35395 / DSM 2834 / JCM 12185 / C2A), this protein is Homocitrate synthase AksA (aksA).